A 272-amino-acid chain; its full sequence is S-adenosylmethionine decarboxylase proenzyme (272 aa).

Catalysis depends on S122, which acts as the Schiff-base intermediate with substrate; via pyruvic acid. At S122 the chain carries Pyruvic acid (Ser); by autocatalysis. Residue H127 is the Proton acceptor; for processing activity of the active site. Residue C150 is the Proton donor; for catalytic activity of the active site.

This sequence belongs to the prokaryotic AdoMetDC family. Type 2 subfamily. As to quaternary structure, heterooctamer of four alpha and four beta chains arranged as a tetramer of alpha/beta heterodimers. The cofactor is pyruvate. Post-translationally, is synthesized initially as an inactive proenzyme. Formation of the active enzyme involves a self-maturation process in which the active site pyruvoyl group is generated from an internal serine residue via an autocatalytic post-translational modification. Two non-identical subunits are generated from the proenzyme in this reaction, and the pyruvate is formed at the N-terminus of the alpha chain, which is derived from the carboxyl end of the proenzyme. The post-translation cleavage follows an unusual pathway, termed non-hydrolytic serinolysis, in which the side chain hydroxyl group of the serine supplies its oxygen atom to form the C-terminus of the beta chain, while the remainder of the serine residue undergoes an oxidative deamination to produce ammonia and the pyruvoyl group blocking the N-terminus of the alpha chain.

It catalyses the reaction S-adenosyl-L-methionine + H(+) = S-adenosyl 3-(methylsulfanyl)propylamine + CO2. It participates in amine and polyamine biosynthesis; S-adenosylmethioninamine biosynthesis; S-adenosylmethioninamine from S-adenosyl-L-methionine: step 1/1. In terms of biological role, catalyzes the decarboxylation of S-adenosylmethionine to S-adenosylmethioninamine (dcAdoMet), the propylamine donor required for the synthesis of the polyamines spermine and spermidine from the diamine putrescine. In Clostridium botulinum (strain Eklund 17B / Type B), this protein is S-adenosylmethionine decarboxylase proenzyme.